The chain runs to 351 residues: Bifunctional UDP-glucose 4-epimerase and UDP-xylose 4-epimerase 3 (351 aa).

8-39 (NILVTGGAGFIGTHTVVQLLNQGFKVTIIDNL) serves as a coordination point for NAD(+). Serine 134 is a substrate binding site. Catalysis depends on tyrosine 158, which acts as the Proton acceptor.

This sequence belongs to the NAD(P)-dependent epimerase/dehydratase family. Homodimer. Heterodimer. Requires NAD(+) as cofactor. As to expression, ubiquitous.

The catalysed reaction is UDP-alpha-D-glucose = UDP-alpha-D-galactose. The enzyme catalyses UDP-beta-L-arabinopyranose = UDP-alpha-D-xylose. Its pathway is carbohydrate metabolism; galactose metabolism. The protein operates within nucleotide-sugar biosynthesis; UDP-L-arabinose biosynthesis; UDP-L-arabinose from UDP-alpha-D-xylose: step 1/1. It participates in cell wall biogenesis; cell wall polysaccharide biosynthesis. Strongly inhibited by UDP. Functionally, catalyzes the interconversion between UDP-glucose and UDP-galactose and the interconversion between UDP-arabinose and UDP-xylose. Cooperates with UGE2 in pollen development. May preferentially act in the UDP-galactose to UDP-glucose direction, therefore displaying a role in carbohydrate catabolism. This Arabidopsis thaliana (Mouse-ear cress) protein is Bifunctional UDP-glucose 4-epimerase and UDP-xylose 4-epimerase 3 (UGE3).